Consider the following 152-residue polypeptide: Sec-independent protein translocase protein TatB (152 aa).

A helical membrane pass occupies residues 1–21; that stretch reads MFDVAPSELLLVAVVALVVIG. A compositionally biased stretch (basic and acidic residues) spans 60 to 71; sequence EDMEKRWAEENA. The tract at residues 60-152 is disordered; that stretch reads EDMEKRWAEE…KEADQQEKQS (93 aa). Low complexity-rich tracts occupy residues 84-98 and 124-140; these read TASTSSPATPSPVSD and AANHTETTATTAASTPA. Residues 141-152 are compositionally biased toward basic and acidic residues; it reads KPKEADQQEKQS.

It belongs to the TatB family. In terms of assembly, the Tat system comprises two distinct complexes: a TatABC complex, containing multiple copies of TatA, TatB and TatC subunits, and a separate TatA complex, containing only TatA subunits. Substrates initially bind to the TatABC complex, which probably triggers association of the separate TatA complex to form the active translocon.

The protein localises to the cell inner membrane. Part of the twin-arginine translocation (Tat) system that transports large folded proteins containing a characteristic twin-arginine motif in their signal peptide across membranes. Together with TatC, TatB is part of a receptor directly interacting with Tat signal peptides. TatB may form an oligomeric binding site that transiently accommodates folded Tat precursor proteins before their translocation. In Zymomonas mobilis subsp. mobilis (strain ATCC 31821 / ZM4 / CP4), this protein is Sec-independent protein translocase protein TatB.